Reading from the N-terminus, the 114-residue chain is Ribonuclease P protein component (114 aa).

It belongs to the RnpA family. In terms of assembly, consists of a catalytic RNA component (M1 or rnpB) and a protein subunit.

The enzyme catalyses Endonucleolytic cleavage of RNA, removing 5'-extranucleotides from tRNA precursor.. Its function is as follows. RNaseP catalyzes the removal of the 5'-leader sequence from pre-tRNA to produce the mature 5'-terminus. It can also cleave other RNA substrates such as 4.5S RNA. The protein component plays an auxiliary but essential role in vivo by binding to the 5'-leader sequence and broadening the substrate specificity of the ribozyme. This Clostridioides difficile (strain 630) (Peptoclostridium difficile) protein is Ribonuclease P protein component.